Here is a 306-residue protein sequence, read N- to C-terminus: Glutathione transport system permease protein GsiC (306 aa).

At 1–8 (MLNYVLKR) the chain is on the cytoplasmic side. A helical membrane pass occupies residues 9-29 (LLGLIPTLLIVAVLVFLFVHL). The Periplasmic segment spans residues 30–102 (LPGDPARLIA…SRFLPTLWLT (73 aa)). In terms of domain architecture, ABC transmembrane type-1 spans 95–292 (FLPTLWLTIT…LEFILINLVV (198 aa)). Residues 103 to 123 (ITSMIWAVLFGMAIGIAAAVW) traverse the membrane as a helical segment. At 124–134 (RNRWPDRLGMT) the chain is on the cytoplasmic side. The helical transmembrane segment at 135-155 (LAVTGISFPAFALGMLLMQIF) threads the bilayer. At 156-168 (SVDLGWLPTVGAD) the chain is on the periplasmic side. Residues 169–189 (SWQHYILPSLTLGAAVASVMA) traverse the membrane as a helical segment. Residues 190–228 (RFTRSSFVDVLSEDYMRTARAKGVSETWVVLKHGLRNAM) lie on the Cytoplasmic side of the membrane. The chain crosses the membrane as a helical span at residues 229 to 249 (IPVVTMMGLQFGFLLGGSIVV). At 250–278 (EKVFNWPGLGRLLVDSVDMRDYPVIQAEV) the chain is on the periplasmic side. A helical membrane pass occupies residues 279–299 (LLFSLEFILINLVVDVLYAAI). Topologically, residues 300–306 (NPAIRYK) are cytoplasmic.

This sequence belongs to the binding-protein-dependent transport system permease family. The complex is composed of two ATP-binding proteins (GsiA), two transmembrane proteins (GsiC and GsiD) and a solute-binding protein (GsiB).

It is found in the cell inner membrane. Functionally, part of the ABC transporter complex GsiABCD involved in glutathione import. Probably responsible for the translocation of the substrate across the membrane. In Salmonella paratyphi A (strain ATCC 9150 / SARB42), this protein is Glutathione transport system permease protein GsiC.